Consider the following 367-residue polypeptide: Histidinol-phosphate aminotransferase (367 aa).

Lys226 bears the N6-(pyridoxal phosphate)lysine mark.

The protein belongs to the class-II pyridoxal-phosphate-dependent aminotransferase family. Histidinol-phosphate aminotransferase subfamily. Homodimer. The cofactor is pyridoxal 5'-phosphate.

It carries out the reaction L-histidinol phosphate + 2-oxoglutarate = 3-(imidazol-4-yl)-2-oxopropyl phosphate + L-glutamate. Its pathway is amino-acid biosynthesis; L-histidine biosynthesis; L-histidine from 5-phospho-alpha-D-ribose 1-diphosphate: step 7/9. This chain is Histidinol-phosphate aminotransferase, found in Wolinella succinogenes (strain ATCC 29543 / DSM 1740 / CCUG 13145 / JCM 31913 / LMG 7466 / NCTC 11488 / FDC 602W) (Vibrio succinogenes).